Reading from the N-terminus, the 1242-residue chain is Structural polyprotein (1242 aa).

Positions 1–36 (MFPYPTLNYPPMAPVNPMAYRDPNPPRRRWRPFRPP) are necessary for nucleocapsid assembly and virus assembly. Residues 1 to 104 (MFPYPTLNYP…KQKPGKRQRM (104 aa)) form a disordered region. Positions 37-70 (LAAQIEDLRRSIANLTFKQRAPNPPAGPPAKRKK) are host transcription inhibition. A Supraphysiological nuclear export signal motif is present at residues 44 to 51 (LRRSIANL). The segment covering 66–104 (AKRKKPAPKPKPAAPKKKRQPPPAKKQKRKQKPGKRQRM) has biased composition (basic residues). The Nuclear localization signal motif lies at 67–70 (KRKK). The interval 83–113 (KRQPPPAKKQKRKQKPGKRQRMCMKLESDKT) is binding to the viral RNA. The tract at residues 98 to 112 (PGKRQRMCMKLESDK) is ribosome-binding. Position 110 is a phosphoserine (Ser-110). Residues 112–261 (KTFPIMLNGQ…KDTPEGSEPW (150 aa)) form the Peptidase S3 domain. Position 113 is a phosphothreonine (Thr-113). Active-site charge relay system residues include His-138, Asp-160, and Ser-212. Residues 262 to 273 (SLTTVMCVLANI) are functions as an uncleaved signal peptide for the precursor of protein E3/E2. An N-linked (GlcNAc...) asparagine; by host glycan is attached at Asn-272. Residues 325-688 (DLETHFTQYK…YYYNRYPMTT (364 aa)) lie on the Extracellular side of the membrane. Residues 689 to 709 (VIGLCTCVAIIMVSCVTSVWL) form a helical membrane-spanning segment. Topologically, residues 710 to 744 (LCRTRNLCITPYRLAPNAQVPILLAVLCCVKPTRA) are cytoplasmic. 3 S-palmitoyl cysteine; by host lipidation sites follow: Cys-717, Cys-737, and Cys-738. A transient transmembrane before p62-6K protein processing region spans residues 717–737 (CITPYRLAPNAQVPILLAVLC). The Extracellular segment spans residues 745–759 (DDTLQVLNYLWNNNQ). The next 2 helical transmembrane spans lie at 760-780 (NFFW…MRML) and 781-801 (RCLL…GAAA). Topologically, residues 802 to 1218 (YEHAAVMPNK…WSWLKVLVGS (417 aa)) are extracellular. Intrachain disulfides connect Cys-850/Cys-915, Cys-863/Cys-895, Cys-864/Cys-897, Cys-869/Cys-879, Cys-1061/Cys-1073, Cys-1103/Cys-1178, Cys-1108/Cys-1182, and Cys-1130/Cys-1172. Residues 885 to 902 (VYPFMWGGAYCFCDTENT) are E1 fusion peptide loop. A helical membrane pass occupies residues 1219-1239 (TSAFIVLGLIATAVVALVLFT). The Cytoplasmic segment spans residues 1240-1242 (HRH).

In terms of assembly, part of a tetrameric complex composed of host CRM1, host importin alpha/beta dimer and the viral capsid; this complex blocks the receptor-mediated transport through the nuclear pore. Interacts with host phosphatase PPP1CA; this interaction dephosphorylates the capsid protein, which increases its ability to bind to the viral genome. Interacts with host karyopherin KPNA4; this interaction allows the nuclear import of the viral capsid protein. Interacts with spike glycoprotein E2. Interacts with host IRAK1; the interaction leads to inhibition of IRAK1-dependent signaling. As to quaternary structure, the precursor of protein E3/E2 and E1 form a heterodimer shortly after synthesis. The precursor of protein E3/E2 and E1 form a heterodimer shortly after synthesis. Processing of the precursor of protein E3/E2 into E2 and E3 results in a heterodimer of the spike glycoproteins E2 and E1. Spike at virion surface are constituted of three E2-E1 heterodimers. After target cell attachment and endocytosis, E1 change conformation to form homotrimers. Interacts with 6K protein. In terms of assembly, processing of the precursor of protein E3/E2 into E2 and E3 results in a heterodimer of the spike glycoproteins E2 and E1. Spike at virion surface are constituted of three E2-E1 heterodimers. Interacts with 6K protein. As to quaternary structure, interacts with spike glycoprotein E1. Interacts with spike glycoprotein E2. In terms of processing, structural polyprotein: Specific enzymatic cleavages in vivo yield mature proteins. Capsid protein is auto-cleaved during polyprotein translation, unmasking a signal peptide at the N-terminus of the precursor of E3/E2. The remaining polyprotein is then targeted to the host endoplasmic reticulum, where host signal peptidase cleaves it into pE2, 6K and E1 proteins. pE2 is further processed to mature E3 and E2 by host furin in trans-Golgi vesicle. Phosphorylated on serine and threonine residues. Post-translationally, palmitoylated via thioester bonds. These palmitoylations may induce disruption of the C-terminus transmembrane. This would result in the reorientation of E2 C-terminus from lumenal to cytoplasmic side. In terms of processing, N-glycosylated. Palmitoylated via thioester bonds.

It is found in the virion. It localises to the host cytoplasm. Its subcellular location is the host cell membrane. The protein resides in the host nucleus. The protein localises to the virion membrane. It carries out the reaction Autocatalytic release of the core protein from the N-terminus of the togavirus structural polyprotein by hydrolysis of a -Trp-|-Ser- bond.. In terms of biological role, forms an icosahedral capsid with a T=4 symmetry composed of 240 copies of the capsid protein surrounded by a lipid membrane through which penetrate 80 spikes composed of trimers of E1-E2 heterodimers. The capsid protein binds to the viral RNA genome at a site adjacent to a ribosome binding site for viral genome translation following genome release. Possesses a protease activity that results in its autocatalytic cleavage from the nascent structural protein. Following its self-cleavage, the capsid protein transiently associates with ribosomes, and within several minutes the protein binds to viral RNA and rapidly assembles into icosahedric core particles. The resulting nucleocapsid eventually associates with the cytoplasmic domain of the spike glycoprotein E2 at the cell membrane, leading to budding and formation of mature virions. In case of infection, new virions attach to target cells and after clathrin-mediated endocytosis their membrane fuses with the host endosomal membrane. This leads to the release of the nucleocapsid into the cytoplasm, followed by an uncoating event necessary for the genomic RNA to become accessible. The uncoating might be triggered by the interaction of capsid proteins with ribosomes. Binding of ribosomes would release the genomic RNA since the same region is genomic RNA-binding and ribosome-binding. Specifically inhibits interleukin-1 receptor-associated kinase 1/IRAK1-dependent signaling during viral entry, representing a means by which the alphaviruses may evade innate immune detection and activation prior to viral gene expression. Inhibits host transcription. Forms a tetrameric complex with XPO1/CRM1 and the nuclear import receptor importin. This complex blocks the central channel of host nuclear pores thereby inhibiting the receptor-mediated nuclear transport and thus the host mRNA and rRNA transcription. The inhibition of transcription is linked to a cytopathic effect on the host cell. Functionally, provides the signal sequence for the translocation of the precursor of protein E3/E2 to the host endoplasmic reticulum. Furin-cleaved E3 remains associated with spike glycoprotein E1 and mediates pH protection of the latter during the transport via the secretory pathway. After virion release from the host cell, the assembly protein E3 is gradually released in the extracellular space. Its function is as follows. Plays a role in viral attachment to target host cell, by binding to the cell receptor. Synthesized as a p62 precursor which is processed by furin at the cell membrane just before virion budding, giving rise to E2-E1 heterodimer. The p62-E1 heterodimer is stable, whereas E2-E1 is unstable and dissociate at low pH. p62 is processed at the last step, presumably to avoid E1 fusion activation before its final export to cell surface. E2 C-terminus contains a transitory transmembrane that would be disrupted by palmitoylation, resulting in reorientation of the C-terminal tail from lumenal to cytoplasmic side. This step is critical since E2 C-terminus is involved in budding by interacting with capsid proteins. This release of E2 C-terminus in cytoplasm occurs lately in protein export, and precludes premature assembly of particles at the endoplasmic reticulum membrane. Constitutive membrane protein involved in virus glycoprotein processing, cell permeabilization, and the budding of viral particles. Disrupts the calcium homeostasis of the cell, probably at the endoplasmic reticulum level. This leads to cytoplasmic calcium elevation. Because of its lipophilic properties, the 6K protein is postulated to influence the selection of lipids that interact with the transmembrane domains of the glycoproteins, which, in turn, affects the deformability of the bilayer required for the extreme curvature that occurs as budding proceeds. Present in low amount in virions, about 3% compared to viral glycoproteins. In terms of biological role, class II viral fusion protein. Fusion activity is inactive as long as E1 is bound to E2 in mature virion. After virus attachment to target cell and endocytosis, acidification of the endosome would induce dissociation of E1/E2 heterodimer and concomitant trimerization of the E1 subunits. This E1 trimer is fusion active, and promotes release of viral nucleocapsid in cytoplasm after endosome and viral membrane fusion. Efficient fusion requires the presence of cholesterol and sphingolipid in the target membrane. Fusion is optimal at levels of about 1 molecule of cholesterol per 2 molecules of phospholipids, and is specific for sterols containing a 3-beta-hydroxyl group. The sequence is that of Structural polyprotein from Aedes (Human).